The sequence spans 361 residues: Chorismate synthase (361 aa).

The segment covering Asp40–Arg49 has biased composition (basic and acidic residues). The interval Asp40 to Arg60 is disordered. Positions 48 and 54 each coordinate NADP(+). Residues Arg125–Ser127, Asn237–Ala238, Gly277, Lys292–Ser296, and Arg318 each bind FMN.

Belongs to the chorismate synthase family. As to quaternary structure, homotetramer. It depends on FMNH2 as a cofactor.

It carries out the reaction 5-O-(1-carboxyvinyl)-3-phosphoshikimate = chorismate + phosphate. Its pathway is metabolic intermediate biosynthesis; chorismate biosynthesis; chorismate from D-erythrose 4-phosphate and phosphoenolpyruvate: step 7/7. Functionally, catalyzes the anti-1,4-elimination of the C-3 phosphate and the C-6 proR hydrogen from 5-enolpyruvylshikimate-3-phosphate (EPSP) to yield chorismate, which is the branch point compound that serves as the starting substrate for the three terminal pathways of aromatic amino acid biosynthesis. This reaction introduces a second double bond into the aromatic ring system. This Chromohalobacter salexigens (strain ATCC BAA-138 / DSM 3043 / CIP 106854 / NCIMB 13768 / 1H11) protein is Chorismate synthase.